The sequence spans 922 residues: TBC1 domain family member 2A (922 aa).

Positions 1–37 (MEDAPERTPSSSESTQPPGLAREPEVVSPGDSEGCAR) are disordered. Residues 1–168 (MEDAPERTPS…AENGPTLHLK (168 aa)) form an interaction with CADH1 region. Residues 8-17 (TPSSSESTQP) are compositionally biased toward polar residues. Residues 43-141 (PKKLCGYLSK…WLQQLQMKRW (99 aa)) form the PH domain. A disordered region spans residues 228-297 (NKQAQAAAHG…KRQSNTFPFF (70 aa)). Basic and acidic residues predominate over residues 262-271 (LPEKEPEDPA). A compositionally biased stretch (polar residues) spans 275–295 (PRSSVPSGPTQKPKRQSNTFP). Residues 298 to 435 (SDGLARSRTA…QKLTEDLAQP (138 aa)) are interaction with RAC1. Coiled coils occupy residues 302–333 (ARSR…ELVI), 362–417 (LELV…NHAK), and 443–476 (FLSQ…QVTK). The Rab-GAP TBC domain maps to 619-811 (GVPREHRPRV…RVWDAFLYEG (193 aa)). Positions 869-904 (MKQLRQLRAAHRERLEAELRELELLKVEYLQRRASL) form a coiled coil. At serine 914 the chain carries Phosphoserine.

Interacts with activated RAC1 and CDH1.

The protein localises to the cytoplasm. Its subcellular location is the cytoplasmic vesicle. It localises to the cell junction. Acts as a GTPase-activating protein for RAB7A. Signal effector acting as a linker between RAC1 and RAB7A, leading to RAB7A inactivation and subsequent inhibition of cadherin degradation and reduced cell-cell adhesion. The polypeptide is TBC1 domain family member 2A (Tbc1d2) (Mus musculus (Mouse)).